Consider the following 388-residue polypeptide: Serine/threonine-protein phosphatase sitA (388 aa).

Residues D67 and H69 each coordinate Mn(2+). The segment at 86–146 (PDGSEAEAPK…SQRDRSSSSG (61 aa)) is disordered. The Mn(2+) site is built by D161 and N193. The Proton donor role is filled by H194. The Mn(2+) site is built by H243 and H317.

This sequence belongs to the PPP phosphatase family. PP-6 (PP-V) subfamily. Requires Mn(2+) as cofactor.

The catalysed reaction is O-phospho-L-threonyl-[protein] + H2O = L-threonyl-[protein] + phosphate. In terms of biological role, protein phosphatase that acts as a modulator of pkcA/mpkA activity involved in the cell wall integrity pathway. Plays an important role in regulation of adhesion, cell wall integrity, biofilm formation, and virulence. This Aspergillus fumigatus (strain ATCC MYA-4609 / CBS 101355 / FGSC A1100 / Af293) (Neosartorya fumigata) protein is Serine/threonine-protein phosphatase sitA.